The sequence spans 187 residues: MLNRNQKYDLHTIILNSKSLRKHHIKEEDVIHLKGDVKEHFYELKIVKEAHNMAFKKCTVEEGLQLRDLFNGEGNIFTTSFHINEDKSELSQLFIDNCIEKGVSAVPHLVYNGASSLLTIDVNGEEYEISRKRLNGLSNYIKSVYSTGDLLEPQDHIFGKIHPSRTFQRTLKKYYMFMKRISELLDN.

This is an uncharacterized protein from Dictyostelium discoideum (Social amoeba).